Reading from the N-terminus, the 287-residue chain is Nucleotide-binding protein Pmob_0154 (287 aa).

Residue 15 to 22 (GLSGAGKT) participates in ATP binding. 64-67 (DIRW) contributes to the GTP binding site.

This sequence belongs to the RapZ-like family.

Its function is as follows. Displays ATPase and GTPase activities. This chain is Nucleotide-binding protein Pmob_0154, found in Petrotoga mobilis (strain DSM 10674 / SJ95).